The following is a 571-amino-acid chain: MRSSGTYENDPSGEITSTSPKQSKQKKPTKFRERMRRWLQNGKNNNHQGEEDVPEIFNKNFYPQTGMTAFNNNDNGEVQDVTNNFFLPSEDESGPVQSSVKTFLTGNNDEDSNFQQNQNPKQKSELPKSPYRQKPTQEIALLKDLFVTNKYDDPYLNSSTRFGNITSTFPSSLSLRTVTLQTIKKRIDCISAKKKEVWKTEEKFLKDILMWLQSSNFEDPDTISLIHEIEKIFEEDIHFEQNVSDCLKEISNNFEYICMRETQLINEGNILKNDLKKYAKAREHKGEKHEDTEVLREKVISSQKSFDVTKRHYKHAISITTRQLFMNLAFEYYENCSDMKDISRKYLQESLSTLQTIDTLSFSEELEKIRKRRFDKFWAKTNPDPTNNIQKFVNMRTGVAGFNDSLMNHLYGKLSFGVAPVEEELQNSQPEHTDVPENVWNEVLSDYNSMDGNPITSNKFLSAKELEPDQLVELLAQEKEEKEAKNISSSTAEVPSISQPEIKKENLESNDSLILRSTKRNVNVNAASLRNLSIKKTQVKPESASEESKVLAAALNDAKQNLDENVWRTPI.

3 disordered regions span residues 1 to 53 (MRSS…EEDV), 67 to 133 (MTAF…PYRQ), and 482 to 501 (KEAKNISSSTAEVPSISQPE). The span at 23–37 (SKQKKPTKFRERMRR) shows a compositional bias: basic residues. Composition is skewed to polar residues over residues 67–86 (MTAFNNNDNGEVQDVTNNFF), 95–121 (PVQSSVKTFLTGNNDEDSNFQQNQNPK), and 486–499 (NISSSTAEVPSISQ). Coiled coils occupy residues 469–486 (DQLVELLAQEKEEKEAKN) and 542–566 (ESASEESKVLAAALNDAKQNLDENV).

Interacts directly with ADY3. Probable component of a spindle pole body (SPB) complex composed of ADY3, SSP1, DON1, MPC54, SPO21/MPC70, NUD1 and CNM67. In terms of processing, phosphorylated.

It localises to the prospore membrane. Its function is as follows. Involved in the pathway that organizes the shaping and sizing of the prospore membrane (PSM) during sporulation. May be required for the formation of ADY3 and DON1-containing protein coats at the leading edge of the PSMs during meiosis II. The protein is Sporulation-specific protein 1 (SSP1) of Saccharomyces cerevisiae (strain ATCC 204508 / S288c) (Baker's yeast).